The chain runs to 199 residues: 3-isopropylmalate dehydratase small subunit (199 aa).

The protein belongs to the LeuD family. LeuD type 1 subfamily. As to quaternary structure, heterodimer of LeuC and LeuD.

It catalyses the reaction (2R,3S)-3-isopropylmalate = (2S)-2-isopropylmalate. The protein operates within amino-acid biosynthesis; L-leucine biosynthesis; L-leucine from 3-methyl-2-oxobutanoate: step 2/4. Its function is as follows. Catalyzes the isomerization between 2-isopropylmalate and 3-isopropylmalate, via the formation of 2-isopropylmaleate. The sequence is that of 3-isopropylmalate dehydratase small subunit from Kocuria rhizophila (strain ATCC 9341 / DSM 348 / NBRC 103217 / DC2201).